We begin with the raw amino-acid sequence, 197 residues long: MFEYPQGYELIAGVDEVGRGPLVGAVVTAAVILDPNNPIEGLADSKKLSEKKRLALAEEIKEKALAWALGRAEANEIDEINILQASLLAMTRAVKSLKIQPHFVLVDGNKIPKDLAIPAQAVVKGDNLVAEISAASILAKVARDQEMEELDKQYPEYAFAQHKGYPTKLHLEKLAELGALPQHRRSFAPVKKALEQF.

In terms of domain architecture, RNase H type-2 spans 9-197 (ELIAGVDEVG…APVKKALEQF (189 aa)). Positions 15, 16, and 107 each coordinate a divalent metal cation.

The protein belongs to the RNase HII family. It depends on Mn(2+) as a cofactor. Mg(2+) serves as cofactor.

It localises to the cytoplasm. The catalysed reaction is Endonucleolytic cleavage to 5'-phosphomonoester.. Its function is as follows. Endonuclease that specifically degrades the RNA of RNA-DNA hybrids. This Haemophilus influenzae (strain 86-028NP) protein is Ribonuclease HII.